We begin with the raw amino-acid sequence, 306 residues long: ATP synthase gamma chain (306 aa).

This sequence belongs to the ATPase gamma chain family. In terms of assembly, F-type ATPases have 2 components, CF(1) - the catalytic core - and CF(0) - the membrane proton channel. CF(1) has five subunits: alpha(3), beta(3), gamma(1), delta(1), epsilon(1). CF(0) has three main subunits: a, b and c.

The protein resides in the cell membrane. In terms of biological role, produces ATP from ADP in the presence of a proton gradient across the membrane. The gamma chain is believed to be important in regulating ATPase activity and the flow of protons through the CF(0) complex. In Bifidobacterium animalis subsp. lactis (strain AD011), this protein is ATP synthase gamma chain.